Here is a 494-residue protein sequence, read N- to C-terminus: Acetylcholine receptor subunit epsilon (494 aa).

The signal sequence occupies residues 1 to 20 (MTMALLGTLLLLALFGRSQG). At 21–239 (KNEELSLYHH…VIYTLIIRRK (219 aa)) the chain is on the extracellular side. Asn-86 and Asn-161 each carry an N-linked (GlcNAc...) asparagine glycan. Cys-148 and Cys-162 are oxidised to a cystine. The helical transmembrane segment at 240-264 (PLFYVINIIVPCVLISGLVLLAYFL) threads the bilayer. The Cytoplasmic portion of the chain corresponds to 265–272 (PAQAGGQK). The helical transmembrane segment at 273 to 291 (CTVSINVLLAQTVFLFLIA) threads the bilayer. Topologically, residues 292-306 (QKIPETSLSVPLLGR) are extracellular. The chain crosses the membrane as a helical span at residues 307-328 (YLIFVMVVATLIVMNCVIVLNV). The Cytoplasmic segment spans residues 329-457 (SLRTPTTHAT…WVRMGKALDN (129 aa)). A helical transmembrane segment spans residues 458–481 (VCFWAALVLFSVGSTLIFLGGYFN). Topologically, residues 482-494 (QVPDLPYPPCIQP) are extracellular.

Belongs to the ligand-gated ion channel (TC 1.A.9) family. Acetylcholine receptor (TC 1.A.9.1) subfamily. Epsilon/CHRNE sub-subfamily. As to quaternary structure, pentamer of two alpha chains, and one each of the beta, delta, and gamma (in immature muscle) or epsilon (in mature muscle) chains. The muscle heteropentamer composed of alpha-1, beta-1, delta, epsilon subunits interacts with the alpha-conotoxin ImII.

It localises to the postsynaptic cell membrane. The protein resides in the cell membrane. The catalysed reaction is K(+)(in) = K(+)(out). It carries out the reaction Na(+)(in) = Na(+)(out). In terms of biological role, after binding acetylcholine, the AChR responds by an extensive change in conformation that affects all subunits and leads to opening of an ion-conducting channel across the plasma membrane. The chain is Acetylcholine receptor subunit epsilon (Chrne) from Rattus norvegicus (Rat).